A 243-amino-acid polypeptide reads, in one-letter code: Proteasome subunit beta (243 aa).

Composition is skewed to basic and acidic residues over residues 1–11 (MRTPTHDEFSG) and 33–47 (NADRRADELGDKETK). Residues 1 to 49 (MRTPTHDEFSGRLDSLNGDRSNVFGPELGEFSNADRRADELGDKETKTG) constitute a propeptide, removed in mature form; by autocatalysis. A disordered region spans residues 1 to 50 (MRTPTHDEFSGRLDSLNGDRSNVFGPELGEFSNADRRADELGDKETKTGT). Threonine 50 serves as the catalytic Nucleophile. Serine 129 carries the phosphoserine modification.

The protein belongs to the peptidase T1B family. As to quaternary structure, the 20S proteasome core is composed of 14 alpha and 14 beta subunits that assemble into four stacked heptameric rings, resulting in a barrel-shaped structure. The two inner rings, each composed of seven catalytic beta subunits, are sandwiched by two outer rings, each composed of seven alpha subunits. H.volcanii produces at least 2 types of 20S proteasomes: an alpha1-beta proteasome and a proteasome containing all three subunits (alpha1, alpha2, and beta) that appears to be asymmetrical with homo-oligomeric alpha1 and alpha2 rings positioned on separate ends. The catalytic chamber with the active sites is on the inside of the barrel. Has probably a gated structure, the ends of the cylinder being occluded by the N-termini of the alpha-subunits. Is likely capped at one or both ends by the proteasome regulatory ATPase, PAN.

It is found in the cytoplasm. It carries out the reaction Cleavage of peptide bonds with very broad specificity.. Its activity is regulated as follows. The formation of the proteasomal ATPase PAN-20S proteasome complex, via the docking of the C-termini of PAN into the intersubunit pockets in the alpha-rings, triggers opening of the gate for substrate entry. Interconversion between the open-gate and close-gate conformations leads to a dynamic regulation of the 20S proteasome proteolysis activity. In vitro, the chymotrypsin-like activity of the alpha1-beta proteasome is potently inhibited by carbobenzoxyl-leucinyl-leucinyl-leucinal-H (MG132) and significantly by N-acetyl-leucinyl-leucinyl-norleucinal-H (calpain inhibitor I). Functionally, component of the proteasome core, a large protease complex with broad specificity involved in protein degradation. The H.volcanii alpha1-beta proteasome is able to cleave oligopeptides after Phe, Tyr and Trp, poorly after Glu but not after Arg. Thus, displays chymotrypsin-like activity, low caspase-like activity but no trypsin-like activity. This is Proteasome subunit beta from Haloferax volcanii (strain ATCC 29605 / DSM 3757 / JCM 8879 / NBRC 14742 / NCIMB 2012 / VKM B-1768 / DS2) (Halobacterium volcanii).